The following is a 100-amino-acid chain: Urease subunit gamma (100 aa).

Belongs to the urease gamma subunit family. As to quaternary structure, heterotrimer of UreA (gamma), UreB (beta) and UreC (alpha) subunits. Three heterotrimers associate to form the active enzyme.

The protein resides in the cytoplasm. The enzyme catalyses urea + 2 H2O + H(+) = hydrogencarbonate + 2 NH4(+). The protein operates within nitrogen metabolism; urea degradation; CO(2) and NH(3) from urea (urease route): step 1/1. This is Urease subunit gamma from Cupriavidus necator (strain ATCC 17699 / DSM 428 / KCTC 22496 / NCIMB 10442 / H16 / Stanier 337) (Ralstonia eutropha).